A 78-amino-acid chain; its full sequence is Small ribosomal subunit protein bS18 (78 aa).

Belongs to the bacterial ribosomal protein bS18 family. As to quaternary structure, part of the 30S ribosomal subunit. Forms a tight heterodimer with protein bS6.

In terms of biological role, binds as a heterodimer with protein bS6 to the central domain of the 16S rRNA, where it helps stabilize the platform of the 30S subunit. The chain is Small ribosomal subunit protein bS18 from Kocuria rhizophila (strain ATCC 9341 / DSM 348 / NBRC 103217 / DC2201).